A 379-amino-acid chain; its full sequence is Deoxyhypusine synthase (379 aa).

NAD(+)-binding positions include 108–112 (SNLIS), 134–136 (TAG), E140, and D257. A spermidine-binding site is contributed by 139–140 (EE). D262 provides a ligand contact to spermidine. Residue G304 coordinates NAD(+). H309 is a binding site for spermidine. 329-330 (TG) contributes to the NAD(+) binding site. Residues 335-337 (GSD) and 344-350 (EAVSWGK) contribute to the spermidine site. Catalysis depends on K350, which acts as the Nucleophile. Residue 363–364 (DA) coordinates NAD(+).

Belongs to the deoxyhypusine synthase family. The cofactor is NAD(+).

The enzyme catalyses [eIF5A protein]-L-lysine + spermidine = [eIF5A protein]-deoxyhypusine + propane-1,3-diamine. It participates in protein modification; eIF5A hypusination. Catalyzes the NAD-dependent oxidative cleavage of spermidine and the subsequent transfer of the butylamine moiety of spermidine to the epsilon-amino group of a specific lysine residue of the eIF-5A precursor protein to form the intermediate deoxyhypusine residue. This Kluyveromyces lactis (strain ATCC 8585 / CBS 2359 / DSM 70799 / NBRC 1267 / NRRL Y-1140 / WM37) (Yeast) protein is Deoxyhypusine synthase (DYS1).